Reading from the N-terminus, the 363-residue chain is Molybdenum import ATP-binding protein ModC (363 aa).

Residues 1 to 230 form the ABC transporter domain; sequence MISARFSGRQ…PNLPLIHRPD (230 aa). An ATP-binding site is contributed by 31–38; sequence GPSGCGKT. One can recognise a Mop domain in the interval 289–359; sequence DTTILNALPA…LKAMALSAPA (71 aa).

This sequence belongs to the ABC transporter superfamily. Molybdate importer (TC 3.A.1.8) family. The complex is composed of two ATP-binding proteins (ModC), two transmembrane proteins (ModB) and a solute-binding protein (ModA).

Its subcellular location is the cell inner membrane. It catalyses the reaction molybdate(out) + ATP + H2O = molybdate(in) + ADP + phosphate + H(+). Its function is as follows. Part of the ABC transporter complex ModABC involved in molybdenum import. Responsible for energy coupling to the transport system. The chain is Molybdenum import ATP-binding protein ModC from Rhodobacter capsulatus (Rhodopseudomonas capsulata).